Consider the following 262-residue polypeptide: Tethering factor for nuclear proteasome cut8 (262 aa).

This sequence belongs to the cut8/STS1 family. In terms of assembly, binds the proteasome. The N-terminal part (residues 1 to 72) is polyubiquitinated by rhp6, which is required for the interaction with the proteasome.

It localises to the nucleus envelope. Functionally, together with nucleoporin alm1, tethers the proteasome to the nuclear envelope. Involved in ubiquitin-mediated protein degradation and facilitates the degradation of nuclear proteins like mitotic cyclin and cut2. Required for normal progression of anaphase. This chain is Tethering factor for nuclear proteasome cut8, found in Schizosaccharomyces pombe (strain 972 / ATCC 24843) (Fission yeast).